An 827-amino-acid polypeptide reads, in one-letter code: Protein Jade-1 (827 aa).

Residues 1–35 are disordered; that stretch reads MKRVCLPSSSEDSDDNGSLSTSWSQHSRSLPSFRH. Positions 16 to 30 are enriched in polar residues; sequence NGSLSTSWSQHSRSL. The PHD-type 1 zinc-finger motif lies at 200–250; sequence DVVCDVCQSPDGEDGNEMVFCDKCNICVHQACYGILKVPEGSWLCRTCALG. The C2HC pre-PHD-type zinc finger occupies 252 to 286; sequence QPKCLLCPKKGGAMKPTRSGTKWVHVSCALWIPEV. The PHD-type 2 zinc finger occupies 310–366; it reads LLCSLCNEKVGACIQCSIKNCRTAFHVTCAFDHGLEMKTILTQEDEVKFKSYCPKHG. Disordered regions lie at residues 622–705 and 769–810; these read TVAK…SSSL and RTKE…SSSS. 2 stretches are compositionally biased toward basic and acidic residues: residues 646–661 and 669–682; these read SRTQGDTKFDSKEKPL and KHTEPPERPAEKKR. Residues 692 to 705 show a composition bias toward polar residues; the sequence is ATASSNKKQCSSSL.

Belongs to the JADE family. As to quaternary structure, component of the HBO1 complex composed.

The protein localises to the nucleus. Its subcellular location is the chromosome. It localises to the cytoplasm. It is found in the cytoskeleton. The protein resides in the cilium basal body. In terms of biological role, scaffold subunit of some HBO1 complexes, which have a histone H4 acetyltransferase activity. Plays a key role in HBO1 complex by directing KAT7/HBO1 specificity towards histone H4 acetylation (H4K5ac, H4K8ac and H4K12ac), regulating DNA replication initiation, regulating DNA replication initiation. In Xenopus laevis (African clawed frog), this protein is Protein Jade-1 (jade1).